Here is a 385-residue protein sequence, read N- to C-terminus: Homoserine O-succinyltransferase (385 aa).

The region spanning 46–355 (NAILICHALS…NSQHGHDAFL (310 aa)) is the AB hydrolase-1 domain. Residue serine 151 is the Nucleophile of the active site. Arginine 221 is a substrate binding site. Active-site residues include aspartate 318 and histidine 351. Aspartate 352 contacts substrate.

The protein belongs to the AB hydrolase superfamily. MetX family. In terms of assembly, homodimer.

Its subcellular location is the cytoplasm. The enzyme catalyses L-homoserine + succinyl-CoA = O-succinyl-L-homoserine + CoA. The protein operates within amino-acid biosynthesis; L-methionine biosynthesis via de novo pathway; O-succinyl-L-homoserine from L-homoserine: step 1/1. Functionally, transfers a succinyl group from succinyl-CoA to L-homoserine, forming succinyl-L-homoserine. The polypeptide is Homoserine O-succinyltransferase (Hydrogenovibrio crunogenus (strain DSM 25203 / XCL-2) (Thiomicrospira crunogena)).